The following is a 154-amino-acid chain: Endoribonuclease YbeY (154 aa).

Positions 114, 118, and 124 each coordinate Zn(2+).

The protein belongs to the endoribonuclease YbeY family. Requires Zn(2+) as cofactor.

It is found in the cytoplasm. Single strand-specific metallo-endoribonuclease involved in late-stage 70S ribosome quality control and in maturation of the 3' terminus of the 16S rRNA. This Histophilus somni (strain 129Pt) (Haemophilus somnus) protein is Endoribonuclease YbeY.